Reading from the N-terminus, the 386-residue chain is Cytochrome b (386 aa).

Transmembrane regions (helical) follow at residues 39 to 59 (FGSL…FLAM), 83 to 104 (FMLK…YIHM), 119 to 139 (WNIG…GYVL), and 184 to 204 (FFSL…LHIL). Heme b-binding residues include H89 and H103. H188 and H202 together coordinate heme b. H207 contributes to the a ubiquinone binding site. The next 4 helical transmembrane spans lie at 232–252 (YKDL…CYFM), 294–314 (LGGV…PFIH), 326–346 (LGKI…WLGA), and 353–374 (YIMI…LVPL).

This sequence belongs to the cytochrome b family. The main subunits of complex b-c1 are: cytochrome b, cytochrome c1 and the Rieske protein. Heme b serves as cofactor.

It localises to the mitochondrion inner membrane. In terms of biological role, component of the ubiquinol-cytochrome c reductase complex (complex III or cytochrome b-c1 complex) that is part of the mitochondrial respiratory chain. The b-c1 complex mediates electron transfer from ubiquinol to cytochrome c. Contributes to the generation of a proton gradient across the mitochondrial membrane that is then used for ATP synthesis. This Sarcophyton glaucum (Toadstool umbrella leather coral) protein is Cytochrome b (MT-CYB).